The following is a 142-amino-acid chain: Hemoglobin subunit alpha-I/II (142 aa).

The Globin domain occupies 2-142 (VLSAADKGNV…VSTVLTSKYR (141 aa)). Residue Ser-4 is modified to Phosphoserine. N6-succinyllysine is present on residues Lys-8 and Lys-12. Lys-17 carries the post-translational modification N6-acetyllysine; alternate. Residue Lys-17 is modified to N6-succinyllysine; alternate. Tyr-25 bears the Phosphotyrosine mark. Ser-36 carries the phosphoserine modification. Lys-41 is modified (N6-succinyllysine). At Ser-50 the chain carries Phosphoserine. His-59 lines the O2 pocket. His-88 serves as a coordination point for heme b. Ser-103 is modified (phosphoserine). Residue Thr-109 is modified to Phosphothreonine. Ser-125 carries the phosphoserine modification. 2 positions are modified to phosphothreonine: Thr-135 and Thr-138. Phosphoserine is present on Ser-139.

The protein belongs to the globin family. Heterotetramer of two alpha chains and two beta chains. In terms of tissue distribution, red blood cells.

Involved in oxygen transport from the lung to the various peripheral tissues. In Bison bonasus (European bison), this protein is Hemoglobin subunit alpha-I/II.